Consider the following 329-residue polypeptide: GTP 3',8-cyclase (329 aa).

In terms of domain architecture, Radical SAM core spans Ala-8 to Ala-234. Arg-17 serves as a coordination point for GTP. Residues Cys-24 and Cys-28 each contribute to the [4Fe-4S] cluster site. Tyr-30 provides a ligand contact to S-adenosyl-L-methionine. [4Fe-4S] cluster is bound at residue Cys-31. Position 68 (Arg-68) interacts with GTP. Gly-72 is a binding site for S-adenosyl-L-methionine. Thr-99 contacts GTP. Position 123 (Ser-123) interacts with S-adenosyl-L-methionine. Lys-160 contributes to the GTP binding site. Met-194 contacts S-adenosyl-L-methionine. [4Fe-4S] cluster-binding residues include Cys-257 and Cys-260. Position 262-264 (Arg-262–Arg-264) interacts with GTP. Cys-274 is a [4Fe-4S] cluster binding site.

The protein belongs to the radical SAM superfamily. MoaA family. In terms of assembly, monomer and homodimer. The cofactor is [4Fe-4S] cluster.

It carries out the reaction GTP + AH2 + S-adenosyl-L-methionine = (8S)-3',8-cyclo-7,8-dihydroguanosine 5'-triphosphate + 5'-deoxyadenosine + L-methionine + A + H(+). It participates in cofactor biosynthesis; molybdopterin biosynthesis. Its function is as follows. Catalyzes the cyclization of GTP to (8S)-3',8-cyclo-7,8-dihydroguanosine 5'-triphosphate. This is GTP 3',8-cyclase from Escherichia coli O139:H28 (strain E24377A / ETEC).